The chain runs to 272 residues: Alcohol dehydrogenase-related 31 kDa protein (272 aa).

11-34 contributes to the NAD(+) binding site; it reads YVADCGGIALETSKVLMTKNIAKL. Residue serine 139 coordinates substrate. Tyrosine 152 serves as the catalytic Proton acceptor.

This sequence belongs to the short-chain dehydrogenases/reductases (SDR) family.

The protein is Alcohol dehydrogenase-related 31 kDa protein (Adhr) of Drosophila mauritiana (Fruit fly).